Consider the following 332-residue polypeptide: Glycerol-3-phosphate dehydrogenase [NAD(P)+] (332 aa).

4 residues coordinate NADPH: S14, W15, R35, and K107. Sn-glycerol 3-phosphate-binding residues include K107, G137, and S139. A141 contributes to the NADPH binding site. Residues K192, D245, S255, R256, and N257 each contribute to the sn-glycerol 3-phosphate site. The active-site Proton acceptor is K192. R256 lines the NADPH pocket. V280 and E282 together coordinate NADPH.

This sequence belongs to the NAD-dependent glycerol-3-phosphate dehydrogenase family.

It is found in the cytoplasm. It catalyses the reaction sn-glycerol 3-phosphate + NAD(+) = dihydroxyacetone phosphate + NADH + H(+). It carries out the reaction sn-glycerol 3-phosphate + NADP(+) = dihydroxyacetone phosphate + NADPH + H(+). It participates in membrane lipid metabolism; glycerophospholipid metabolism. Its function is as follows. Catalyzes the reduction of the glycolytic intermediate dihydroxyacetone phosphate (DHAP) to sn-glycerol 3-phosphate (G3P), the key precursor for phospholipid synthesis. The sequence is that of Glycerol-3-phosphate dehydrogenase [NAD(P)+] from Desulfovibrio desulfuricans (strain ATCC 27774 / DSM 6949 / MB).